Reading from the N-terminus, the 470-residue chain is Uronate isomerase (470 aa).

Belongs to the metallo-dependent hydrolases superfamily. Uronate isomerase family.

The enzyme catalyses D-glucuronate = D-fructuronate. It catalyses the reaction aldehydo-D-galacturonate = keto-D-tagaturonate. It functions in the pathway carbohydrate metabolism; pentose and glucuronate interconversion. In Escherichia coli O8 (strain IAI1), this protein is Uronate isomerase.